Reading from the N-terminus, the 301-residue chain is Inactive C-alpha-formylglycine-generating enzyme 2 (301 aa).

The first 25 residues, 1–25, serve as a signal peptide directing secretion; it reads MGISLSPLLTVLSLLSGRWLELGNG. A disulfide bond links Cys156 and Cys290. Residue Asn191 is glycosylated (N-linked (GlcNAc...) asparagine). Residues Asn194, Leu195, Asp208, Phe210, Asp229, Gly232, Val234, and Glu236 each contribute to the Ca(2+) site. Residues 274 to 284 show a composition bias toward polar residues; it reads RMGNTPDSASD. Positions 274–301 are disordered; it reads RMGNTPDSASDNLGFRCASGAGRPPGEL. The short motif at 298–301 is the Non-canonical ER retention motif element; that stretch reads PGEL.

It belongs to the sulfatase-modifying factor family. As to quaternary structure, homodimer and heterodimer with SUMF1.

The protein localises to the endoplasmic reticulum lumen. In terms of biological role, lacks formylglycine generating activity and is unable to convert newly synthesized inactive sulfatases to their active form. Inhibits the activation of sulfatases by SUMF1. The protein is Inactive C-alpha-formylglycine-generating enzyme 2 of Bos taurus (Bovine).